We begin with the raw amino-acid sequence, 236 residues long: Peroxisomal coenzyme A diphosphatase NUDT7 (236 aa).

K20 carries the post-translational modification N6-succinyllysine. The Nudix hydrolase domain occupies S37–D169. Positions K77–G98 match the Nudix box motif. Residues E92 and E96 each contribute to the Mg(2+) site. An N6-succinyllysine modification is found at K178. Residues S234 to L236 carry the Microbody targeting signal motif.

This sequence belongs to the Nudix hydrolase family. PCD1 subfamily. Monomer. It depends on Mn(2+) as a cofactor. Mg(2+) is required as a cofactor. As to expression, highly expressed in liver, brown adipose tissue and heart. Expressed at intermediate level in lung and kidney and at low level in brain. In terms of tissue distribution, expressed in liver, brown adipose tissue and heart at 20 times lower levels than isoform 1.

It localises to the peroxisome. The enzyme catalyses hexanoyl-CoA + H2O = hexanoyl-4'-phosphopantetheine + adenosine 3',5'-bisphosphate + 2 H(+). The catalysed reaction is octanoyl-CoA + H2O = S-octanoyl-4'-phosphopantetheine + adenosine 3',5'-bisphosphate + 2 H(+). It carries out the reaction butanoyl-CoA + H2O = S-butanoyl-4'-phosphopantetheine + adenosine 3',5'-bisphosphate + 2 H(+). It catalyses the reaction decanoyl-CoA + H2O = decanoyl-4'-phosphopantetheine + adenosine 3',5'-bisphosphate + 2 H(+). The enzyme catalyses dodecanoyl-CoA + H2O = S-dodecanoyl-4'-phosphopantetheine + adenosine 3',5'-bisphosphate + 2 H(+). The catalysed reaction is tetradecanoyl-CoA + H2O = tetradecanoyl-4'-phosphopantetheine + adenosine 3',5'-bisphosphate + 2 H(+). It carries out the reaction choloyl-CoA + H2O = S-choloyl-4'-phosphopantetheine + adenosine 3',5'-bisphosphate + 2 H(+). It catalyses the reaction 3alpha,7alpha,12alpha-trihydroxy-5beta-cholestan-26-oyl-CoA + H2O = 3alpha,7alpha,12alpha-trihydroxy-5beta-cholestan-26-oyl-4'-phosphopantetheine + adenosine 3',5'-bisphosphate + 2 H(+). The enzyme catalyses acetyl-CoA + H2O = S-acetyl-4'-phosphopantetheine + adenosine 3',5'-bisphosphate + 2 H(+). The catalysed reaction is CoA + H2O = (R)-4'-phosphopantetheine + adenosine 3',5'-bisphosphate + 2 H(+). It carries out the reaction propanoyl-CoA + H2O = propanoyl-4'-phosphopantetheine + adenosine 3',5'-bisphosphate + 2 H(+). It catalyses the reaction malonyl-CoA + H2O = malonyl-4'-phosphopantetheine + adenosine 3',5'-bisphosphate + 2 H(+). The enzyme catalyses succinyl-CoA + H2O = succinyl-4'-phosphopantetheine + adenosine 3',5'-bisphosphate + 2 H(+). The catalysed reaction is a 5'-end CoA-ribonucleoside in mRNA + H2O = a 5'-end phospho-adenosine-phospho-ribonucleoside in mRNA + (R)-4'-phosphopantetheine + 2 H(+). Inhibited by fluoride. In terms of biological role, fatty acyl-coenzyme A (CoA) diphosphatase that hydrolyzes fatty acyl-CoA to yield acyl-4'-phosphopantetheine and adenosine 3',5'-bisphosphate. Cleaves CoA, CoA esters and oxidized CoA with similar efficiencies. Preferentially hydrolyzes medium-chain acyl-CoAs and bile acid-CoAs. Has no activity toward NDP-sugars, CDP-alcohols, (deoxy)nucleoside 5'-triphosphates, nucleoside 5'-di or monophosphates, diadenosine polyphosphates, NAD, NADH, NADP, NADPH or thymidine-5'-monophospho-p-nitrophenyl ester. May be required to eliminate oxidized CoA from peroxisomes, or regulate CoA and acyl-CoA levels in this organelle in response to metabolic demand. Does not play a role in U8 snoRNA decapping activity. Binds U8 snoRNA. Exhibits decapping activity towards dpCoA-capped RNAs in vitro. This Mus musculus (Mouse) protein is Peroxisomal coenzyme A diphosphatase NUDT7.